Here is an 85-residue protein sequence, read N- to C-terminus: Neurotoxin BmKAEP2 (85 aa).

Residues M1–A21 form the signal peptide. In terms of domain architecture, LCN-type CS-alpha/beta spans D22 to G82. Disulfide bonds link C31-C81, C35-C56, C42-C63, and C46-C65.

It belongs to the long (4 C-C) scorpion toxin superfamily. Sodium channel inhibitor family. Beta subfamily. In terms of tissue distribution, expressed by the venom gland.

It localises to the secreted. Its function is as follows. Depressant insect beta-toxins cause a transient contraction paralysis followed by a slow flaccid paralysis. They bind voltage-independently at site-4 of sodium channels (Nav) and shift the voltage of activation toward more negative potentials thereby affecting sodium channel activation and promoting spontaneous and repetitive firing. This toxin is active only on insects. Has potential anti-epilepsy effect. This Olivierus martensii (Manchurian scorpion) protein is Neurotoxin BmKAEP2.